Reading from the N-terminus, the 236-residue chain is MICOS complex subunit MIC25 (236 aa).

Over residues 1-11 the composition is skewed to basic and acidic residues; it reads MGSAESREGRR. The disordered stretch occupies residues 1–22; the sequence is MGSAESREGRRASFGMDEEERV. Gly2 carries N-myristoyl glycine lipidation. Ser13 and Ser31 each carry phosphoserine. Disordered stretches follow at residues 34–86 and 109–132; these read VVNR…VQVD and EREA…DQEK. The segment covering 48–58 has biased composition (low complexity); that stretch reads GLLAPPAAALG. Basic and acidic residues-rich tracts occupy residues 62 to 71 and 122 to 132; these read GREKDSKPPR and RRGEGGVDQEK. Residues 127–167 adopt a coiled-coil conformation; that stretch reads GVDQEKQRLAQRARELESQEEELRCRDAFYKEQLGRLERQN. Residues 195–236 form the CHCH domain; that stretch reads EPVCSGLQAQILRCYRDRLQEVLLCADLVRAYQHCVSSAHKG. 2 consecutive short sequence motifs (cx9C motif) follow at residues 198 to 208 and 219 to 229; these read CSGLQAQILRC and CADLVRAYQHC. Disulfide bonds link Cys198–Cys229 and Cys208–Cys219.

This sequence belongs to the MICOS complex subunit Mic19 family. Metazoan Mic25 subfamily. In terms of assembly, component of the mitochondrial contact site and cristae organizing system (MICOS) complex, composed of at least MICOS10/MIC10, CHCHD3/MIC19, CHCHD6/MIC25, APOOL/MIC27, IMMT/MIC60, APOO/MIC23/MIC26 and MICOS13/MIC13. This complex was also known under the names MINOS or MitOS complex. The MICOS complex associates with mitochondrial outer membrane proteins SAMM50, MTX1 and MTX2 (together described as components of the mitochondrial outer membrane sorting assembly machinery (SAM) complex) and DNAJC11, mitochondrial inner membrane protein TMEM11 and with HSPA9. The MICOS and SAM complexes together with DNAJC11 are part of a large protein complex spanning both membranes termed the mitochondrial intermembrane space bridging (MIB) complex. Interacts with DISC1. Interacts with IMMT/MIC60.

The protein localises to the mitochondrion inner membrane. It localises to the mitochondrion. Functionally, component of the MICOS complex, a large protein complex of the mitochondrial inner membrane that plays crucial roles in the maintenance of crista junctions, inner membrane architecture, and formation of contact sites to the outer membrane. This chain is MICOS complex subunit MIC25 (CHCHD6), found in Bos taurus (Bovine).